The chain runs to 423 residues: Serine--tRNA ligase (423 aa).

229–231 serves as a coordination point for L-serine; sequence TAE. 260 to 262 contributes to the ATP binding site; it reads RKE. E283 contacts L-serine. 347 to 350 contributes to the ATP binding site; it reads EISS. Position 383 (S383) interacts with L-serine.

Belongs to the class-II aminoacyl-tRNA synthetase family. Type-1 seryl-tRNA synthetase subfamily. Homodimer. The tRNA molecule binds across the dimer.

It localises to the cytoplasm. It carries out the reaction tRNA(Ser) + L-serine + ATP = L-seryl-tRNA(Ser) + AMP + diphosphate + H(+). The enzyme catalyses tRNA(Sec) + L-serine + ATP = L-seryl-tRNA(Sec) + AMP + diphosphate + H(+). The protein operates within aminoacyl-tRNA biosynthesis; selenocysteinyl-tRNA(Sec) biosynthesis; L-seryl-tRNA(Sec) from L-serine and tRNA(Sec): step 1/1. Its function is as follows. Catalyzes the attachment of serine to tRNA(Ser). Is also able to aminoacylate tRNA(Sec) with serine, to form the misacylated tRNA L-seryl-tRNA(Sec), which will be further converted into selenocysteinyl-tRNA(Sec). This Syntrophotalea carbinolica (strain DSM 2380 / NBRC 103641 / GraBd1) (Pelobacter carbinolicus) protein is Serine--tRNA ligase.